We begin with the raw amino-acid sequence, 154 residues long: MVKAVAVLRGDAKVGGTVVFEQESESAPTTITWDITGNDANAKRGFHIHTFGDNTNGCTSAGPHFNPHGKTHGAPTDEARHVGDLGNLETDGQGNAKGSVKDEHVKLIGPHSVIGRTVVIHAGTDDLGKGDNEESLKTGNAGPRPACGVIGISS.

Cu cation-binding residues include histidine 47, histidine 49, and histidine 64. The cysteines at positions 58 and 147 are disulfide-linked. Positions 64, 72, 81, and 84 each coordinate Zn(2+). Histidine 121 contributes to the Cu cation binding site. Arginine 144 contributes to the substrate binding site.

Belongs to the Cu-Zn superoxide dismutase family. As to quaternary structure, homodimer. It depends on Cu cation as a cofactor. The cofactor is Zn(2+).

It localises to the cytoplasm. It carries out the reaction 2 superoxide + 2 H(+) = H2O2 + O2. In terms of biological role, destroys radicals which are normally produced within the cells and which are toxic to biological systems. This is Superoxide dismutase [Cu-Zn] (SOD1) from Claviceps purpurea (strain 20.1) (Ergot fungus).